The primary structure comprises 597 residues: DNA mismatch repair protein MutL (597 aa).

It belongs to the DNA mismatch repair MutL/HexB family.

In terms of biological role, this protein is involved in the repair of mismatches in DNA. It is required for dam-dependent methyl-directed DNA mismatch repair. May act as a 'molecular matchmaker', a protein that promotes the formation of a stable complex between two or more DNA-binding proteins in an ATP-dependent manner without itself being part of a final effector complex. The polypeptide is DNA mismatch repair protein MutL (Rhodopseudomonas palustris (strain HaA2)).